The sequence spans 292 residues: Type II methyltransferase M.SmaI (292 aa).

Residues 110–130 (WRDKDDKNKGRAMSYRPPTPE) are disordered.

This sequence belongs to the N(4)/N(6)-methyltransferase family. N(4) subfamily.

It catalyses the reaction a 2'-deoxycytidine in DNA + S-adenosyl-L-methionine = an N(4)-methyl-2'-deoxycytidine in DNA + S-adenosyl-L-homocysteine + H(+). Functionally, a beta subtype methylase thatnrecognizes the double-stranded sequence 5'-CCCGGG-3', methylates C-2 on both strands, and protects the DNA from cleavage by the SmaI endonuclease. The polypeptide is Type II methyltransferase M.SmaI (smaIM) (Serratia marcescens).